The following is a 319-amino-acid chain: Transcription elongation factor A protein 1 (319 aa).

Positions 1 to 78 (MQEIIKCREQ…DKWKQDIEGT (78 aa)) constitute a TFIIS N-terminal domain. Positions 78–106 (TSATTTSSSSSSSSSTTSTTTTKTASPSE) are enriched in low complexity. The segment at 78–146 (TSATTTSSSS…TTPKTSSPPI (69 aa)) is disordered. A compositionally biased stretch (basic and acidic residues) spans 107–122 (SLKRKSISEDTSDRPT). Positions 133-146 (ISPPTTPKTSSPPI) are enriched in low complexity. In terms of domain architecture, TFIIS central spans 160 to 272 (LRNKTIQLFV…ASMLGQNNEA (113 aa)). The TFIIS-type zinc-finger motif lies at 275–317 (DQFQCGKCKQRKCTYTQLQTRSADEPPTTFVKCCVKGCGNRWR). Positions 279, 282, 307, and 312 each coordinate Zn(2+).

It belongs to the TFS-II family.

It is found in the nucleus. Necessary for efficient RNA polymerase II transcription elongation past template-encoded arresting sites. The arresting sites in DNA have the property of trapping a certain fraction of elongating RNA polymerases that pass through, resulting in locked ternary complexes. Cleavage of the nascent transcript by S-II allows the resumption of elongation from the new 3'-terminus. This Dictyostelium discoideum (Social amoeba) protein is Transcription elongation factor A protein 1 (tcea1).